The following is a 416-amino-acid chain: Splicing factor U2AF 50 kDa subunit (416 aa).

A compositionally biased stretch (basic and acidic residues) spans 1–10 (MGYDDRERDR). A disordered region spans residues 1 to 47 (MGYDDRERDRERRRHRSRSRDRHRERSRDRRHHRNSRRKPSLYWDVP). 2 stretches are compositionally biased toward basic residues: residues 11 to 21 (ERRRHRSRSRD) and 29 to 40 (DRRHHRNSRRKP). RRM domains lie at 93–175 (RRLY…RPHD), 207–285 (HKIF…RASV), and 318–408 (EVLC…YFDP).

It belongs to the splicing factor SR family. As to quaternary structure, forms a heterodimer with the U2AF small subunit.

It is found in the nucleus. Necessary for the splicing of pre-mRNA. Binds to the polypyrimidine tract of introns early during spliceosome assembly. In Drosophila melanogaster (Fruit fly), this protein is Splicing factor U2AF 50 kDa subunit (U2af50).